A 602-amino-acid polypeptide reads, in one-letter code: Elongation factor 4 (602 aa).

The tr-type G domain occupies 6-188 (DRIRNFCIIA…RIVRDVPPPG (183 aa)). GTP-binding positions include 18–23 (DHGKST) and 135–138 (NKID).

The protein belongs to the TRAFAC class translation factor GTPase superfamily. Classic translation factor GTPase family. LepA subfamily.

The protein localises to the cell membrane. The catalysed reaction is GTP + H2O = GDP + phosphate + H(+). Its function is as follows. Required for accurate and efficient protein synthesis under certain stress conditions. May act as a fidelity factor of the translation reaction, by catalyzing a one-codon backward translocation of tRNAs on improperly translocated ribosomes. Back-translocation proceeds from a post-translocation (POST) complex to a pre-translocation (PRE) complex, thus giving elongation factor G a second chance to translocate the tRNAs correctly. Binds to ribosomes in a GTP-dependent manner. This chain is Elongation factor 4, found in Desulforudis audaxviator (strain MP104C).